Here is a 111-residue protein sequence, read N- to C-terminus: UPF0060 membrane protein Pden_1837 (111 aa).

Helical transmembrane passes span 7 to 27, 30 to 50, 62 to 82, and 91 to 111; these read IAVY…FWAW, LGKS…FAWL, AYAA…WLTE, and ILGG…PRAA.

The protein belongs to the UPF0060 family.

It localises to the cell inner membrane. This chain is UPF0060 membrane protein Pden_1837, found in Paracoccus denitrificans (strain Pd 1222).